Here is a 488-residue protein sequence, read N- to C-terminus: uncharacterized protein (488 aa).

The next 12 membrane-spanning stretches (helical) occupy residues 2–22 (FGLP…VFLV), 27–47 (VHAF…GGMS), 59–79 (FGGT…MGSV), 106–126 (LAIT…FVIL), 176–196 (IGAM…GIVL), 241–261 (LLPI…HLFV), 275–295 (IVSF…ISVY), 314–334 (VKTA…GAVL), 347–367 (IANL…LVRF), 368–388 (IQGS…PILA), 438–458 (VPTT…NLIF), and 461–481 (DGSV…LFYI).

Belongs to the GntP permease family.

It localises to the cell inner membrane. This is an uncharacterized protein from Haemophilus influenzae (strain ATCC 51907 / DSM 11121 / KW20 / Rd).